The chain runs to 248 residues: Ribonuclease PH (248 aa).

Phosphate-binding positions include Arg86 and 124-126 (GTR).

Belongs to the RNase PH family. In terms of assembly, homohexameric ring arranged as a trimer of dimers.

It carries out the reaction tRNA(n+1) + phosphate = tRNA(n) + a ribonucleoside 5'-diphosphate. Phosphorolytic 3'-5' exoribonuclease that plays an important role in tRNA 3'-end maturation. Removes nucleotide residues following the 3'-CCA terminus of tRNAs; can also add nucleotides to the ends of RNA molecules by using nucleoside diphosphates as substrates, but this may not be physiologically important. Probably plays a role in initiation of 16S rRNA degradation (leading to ribosome degradation) during starvation. In Clostridium perfringens (strain SM101 / Type A), this protein is Ribonuclease PH.